The sequence spans 693 residues: ATP-dependent DNA helicase RecG (693 aa).

Positions Thr-48–Glu-146 are wedge domain. A Helicase ATP-binding domain is found at Asp-283–Ile-448. Gly-296–Thr-303 is an ATP binding site. The DEAH box motif lies at Asp-397–His-400. The 147-residue stretch at Glu-482–Glu-628 folds into the Helicase C-terminal domain.

It belongs to the helicase family. RecG subfamily. In terms of assembly, monomer.

It carries out the reaction Couples ATP hydrolysis with the unwinding of duplex DNA by translocating in the 3'-5' direction.. The enzyme catalyses ATP + H2O = ADP + phosphate + H(+). Functionally, plays a critical role in recombination and DNA repair. Helps process Holliday junction intermediates to mature products by catalyzing branch migration. Has replication fork regression activity, unwinds stalled or blocked replication forks to make a HJ that can be resolved. Has a DNA unwinding activity characteristic of a DNA helicase with 3'-5' polarity. Its function is as follows. Plays a role in recovery after DNA ADP-ribosylation. This is ATP-dependent DNA helicase RecG from Escherichia coli O127:H6 (strain E2348/69 / EPEC).